Here is a 304-residue protein sequence, read N- to C-terminus: MPVAPIDFRNVEKRFGDKLVVNGLSFTVQAGECYGLLGPNGAGKTTTLKMLLGLTHPDAGTISLCGEPVPSRARHARQRVGVVPQFDNLDPDFTVRENLLVFGRYFGMSAQAAHALVKPLLEFAKLENKADAKVGELSGGMKRRLTLARALVNDPDVLVLDEPTTGLDPQARHLMWERLRSLLARGKTILITTHFMEEAERLCDRLCVIEEGRKIAEGAPHALIESEIGCDVIEIYGPDPATLRDELSAFAKHTEISGETLFCYVSDPEPLRARLKGRTGLRYLHRPANLEDVFLRLTGREMQD.

Residues 6-236 enclose the ABC transporter domain; the sequence is IDFRNVEKRF…EIGCDVIEIY (231 aa). 38–45 lines the ATP pocket; that stretch reads GPNGAGKT.

The protein belongs to the ABC transporter superfamily. Lipooligosaccharide exporter (TC 3.A.1.102) family. The complex is composed of two ATP-binding proteins (NodI) and two transmembrane proteins (NodJ).

The protein localises to the cell inner membrane. Its function is as follows. Part of the ABC transporter complex NodIJ involved in the export of the nodulation factors (Nod factors), the bacterial signal molecules that induce symbiosis and subsequent nodulation induction. Nod factors are LCO (lipo-chitin oligosaccharide), a modified beta-1,4-linked N-acetylglucosamine oligosaccharide. This subunit is responsible for energy coupling to the transport system. The polypeptide is Nod factor export ATP-binding protein I (Burkholderia lata (strain ATCC 17760 / DSM 23089 / LMG 22485 / NCIMB 9086 / R18194 / 383)).